A 397-amino-acid chain; its full sequence is Elongation factor Tu-2 (397 aa).

Residues 10–206 (KPHVNIGTIG…AVDEFVPEPV (197 aa)) form the tr-type G domain. A G1 region spans residues 19–26 (GHIDHGKT). Residue 19 to 26 (GHIDHGKT) participates in GTP binding. Threonine 26 contributes to the Mg(2+) binding site. The interval 62 to 66 (GITIS) is G2. A G3 region spans residues 83–86 (DCPG). GTP-binding positions include 83–87 (DCPGH) and 138–141 (NKTD). Residues 138-141 (NKTD) form a G4 region. The interval 176–178 (SAL) is G5.

The protein belongs to the TRAFAC class translation factor GTPase superfamily. Classic translation factor GTPase family. EF-Tu/EF-1A subfamily. In terms of assembly, monomer.

It is found in the cytoplasm. The enzyme catalyses GTP + H2O = GDP + phosphate + H(+). In terms of biological role, GTP hydrolase that promotes the GTP-dependent binding of aminoacyl-tRNA to the A-site of ribosomes during protein biosynthesis. This chain is Elongation factor Tu-2, found in Streptomyces ramocissimus.